Reading from the N-terminus, the 170-residue chain is Transcription factor E (170 aa).

An HTH TFE/IIEalpha-type domain is found at 1–93; the sequence is MKDAYLYVVE…AWYVDDEIIR (93 aa).

It belongs to the TFE family. As to quaternary structure, monomer. Interaction with RNA polymerase subunits RpoF and RpoE is necessary for Tfe stimulatory transcription activity. Able to interact with Tbp and RNA polymerase in the absence of DNA promoter. Interacts both with the preinitiation and elongation complexes.

Its function is as follows. Transcription factor that plays a role in the activation of archaeal genes transcribed by RNA polymerase. Facilitates transcription initiation by enhancing TATA-box recognition by TATA-box-binding protein (Tbp), and transcription factor B (Tfb) and RNA polymerase recruitment. Not absolutely required for transcription in vitro, but particularly important in cases where Tbp or Tfb function is not optimal. It dynamically alters the nucleic acid-binding properties of RNA polymerases by stabilizing the initiation complex and destabilizing elongation complexes. Seems to translocate with the RNA polymerase following initiation and acts by binding to the non template strand of the transcription bubble in elongation complexes. The chain is Transcription factor E from Pyrobaculum arsenaticum (strain DSM 13514 / JCM 11321 / PZ6).